We begin with the raw amino-acid sequence, 196 residues long: SAGA-associated factor 11 homolog (196 aa).

The interval 1–22 (MSAANMPTTTGAQGSGNQVPTT) is disordered. The segment at 106-127 (CTCPNCDRLVAAARFAPHLEKC) adopts an SGF11-type zinc-finger fold. Positions 144 to 196 (TKEGASSAHLHSAGNAGGTDDEDDVDWSSDKRRKKSNQNSRNNGSKKNNGKTF) are disordered. Position 172 is a phosphoserine (Ser-172). Residues 180–196 (NQNSRNNGSKKNNGKTF) show a composition bias toward low complexity.

Belongs to the SGF11 family. Component of some SAGA transcription coactivator-HAT complexes, at least composed of Ada2b, not/nonstop, Pcaf/Gcn5, Sgf11 and Spt3. Within the SAGA complex, Sgf11, e(y)2, and not/nonstop form an additional subcomplex of SAGA called the DUB module (deubiquitination module). Interacts directly with not/nonstop. Interacts with the AMEX complex component xmas-2. Interacts with Cbp80; important for promoter recruitment of Sgf11 that is not associated with the DUB module.

It is found in the nucleus. It localises to the nucleoplasm. The protein localises to the cytoplasm. Functionally, component of the transcription regulatory histone acetylation (HAT) complex SAGA, a multiprotein complex that activates transcription by remodeling chromatin and mediating histone acetylation and deubiquitination. Within the SAGA complex, participates in a subcomplex that specifically deubiquitinates histone H2B. The SAGA complex is recruited to specific gene promoters by activators, where it is required for transcription. Required for nuclear receptor-mediated transactivation. Binds independently on SAGA to promoters in an RNA-dependent manner. Binds to mRNA and is essential for total mRNA export from the nucleus. Required to counteract heterochromatin silencing. Controls the development of neuronal connectivity in visual system by being required for accurate axon targeting in the optic lobe. Required for expression of ecdysone-induced genes such as br/broad. This is SAGA-associated factor 11 homolog from Drosophila yakuba (Fruit fly).